The primary structure comprises 210 residues: Large ribosomal subunit protein uL4 (210 aa).

A disordered region spans residues 46-89 (QGTASTLTRSEVRGGGRKPYKQKGTGRARQGSIRTPLRPGGGII). The segment covering 60-71 (GGRKPYKQKGTG) has biased composition (basic residues).

Belongs to the universal ribosomal protein uL4 family. As to quaternary structure, part of the 50S ribosomal subunit.

In terms of biological role, one of the primary rRNA binding proteins, this protein initially binds near the 5'-end of the 23S rRNA. It is important during the early stages of 50S assembly. It makes multiple contacts with different domains of the 23S rRNA in the assembled 50S subunit and ribosome. Its function is as follows. Forms part of the polypeptide exit tunnel. The protein is Large ribosomal subunit protein uL4 of Prochlorococcus marinus (strain MIT 9312).